Reading from the N-terminus, the 691-residue chain is ATP-dependent zinc metalloprotease FtsH 2 (691 aa).

The segment at 1–48 (MTDEPQSDEQQTTEQERPLGTKRATRADGLRRPGVRSGLAERRSPAAD) is disordered. Residues 1–64 (MTDEPQSDEQ…AAVRRFLLRD (64 aa)) lie on the Cytoplasmic side of the membrane. Basic and acidic residues predominate over residues 14–31 (EQERPLGTKRATRADGLR). A helical membrane pass occupies residues 65-85 (VFALGLMIAALVIVILFFTLL). Residues 86 to 168 (GATKPTSSGT…AVKQQPGKAQ (83 aa)) lie on the Extracellular side of the membrane. The chain crosses the membrane as a helical span at residues 169 to 189 (VTIVVQFLLPILLLVCLFALF). Residues 190 to 691 (MRIGQDGGAG…ERGSARDRDA (502 aa)) lie on the Cytoplasmic side of the membrane. 265–272 (GPPGTGKT) contributes to the ATP binding site. Zn(2+) is bound at residue His486. Residue Glu487 is part of the active site. Residues His490 and Asp563 each coordinate Zn(2+).

It in the central section; belongs to the AAA ATPase family. The protein in the C-terminal section; belongs to the peptidase M41 family. As to quaternary structure, homohexamer. Zn(2+) is required as a cofactor.

It localises to the cell membrane. Its function is as follows. Acts as a processive, ATP-dependent zinc metallopeptidase for both cytoplasmic and membrane proteins. Plays a role in the quality control of integral membrane proteins. This is ATP-dependent zinc metalloprotease FtsH 2 from Conexibacter woesei (strain DSM 14684 / CCUG 47730 / CIP 108061 / JCM 11494 / NBRC 100937 / ID131577).